The following is an 877-amino-acid chain: Phosphoenolpyruvate carboxylase (877 aa).

Active-site residues include His137 and Lys544.

Belongs to the PEPCase type 1 family. It depends on Mg(2+) as a cofactor.

It carries out the reaction oxaloacetate + phosphate = phosphoenolpyruvate + hydrogencarbonate. Functionally, forms oxaloacetate, a four-carbon dicarboxylic acid source for the tricarboxylic acid cycle. The protein is Phosphoenolpyruvate carboxylase of Edwardsiella ictaluri (strain 93-146).